Reading from the N-terminus, the 188-residue chain is dCTP deaminase (188 aa).

Residues 111 to 116 (KSTYAR), 135 to 137 (TLE), Q156, Y170, and Q180 contribute to the dCTP site. The active-site Proton donor/acceptor is E137.

It belongs to the dCTP deaminase family. Homotrimer.

The catalysed reaction is dCTP + H2O + H(+) = dUTP + NH4(+). The protein operates within pyrimidine metabolism; dUMP biosynthesis; dUMP from dCTP (dUTP route): step 1/2. Catalyzes the deamination of dCTP to dUTP. The polypeptide is dCTP deaminase (Nitrosomonas eutropha (strain DSM 101675 / C91 / Nm57)).